The primary structure comprises 153 residues: 3-hydroxyacyl-[acyl-carrier-protein] dehydratase FabZ (153 aa).

The active site involves His57.

This sequence belongs to the thioester dehydratase family. FabZ subfamily.

It is found in the cytoplasm. The catalysed reaction is a (3R)-hydroxyacyl-[ACP] = a (2E)-enoyl-[ACP] + H2O. Involved in unsaturated fatty acids biosynthesis. Catalyzes the dehydration of short chain beta-hydroxyacyl-ACPs and long chain saturated and unsaturated beta-hydroxyacyl-ACPs. The protein is 3-hydroxyacyl-[acyl-carrier-protein] dehydratase FabZ of Aeromonas salmonicida (strain A449).